The sequence spans 289 residues: Phycobilisome 39 kDa linker polypeptide, phycocyanin-associated, rod (289 aa).

In terms of domain architecture, PBS-linker spans 2 to 180; sequence PITSAASRLG…LYRGYANSDR (179 aa). The segment at 213–233 is disordered; it reads SYLPSKQGTAPSRTFGRSSQG. Positions 216–233 are enriched in polar residues; the sequence is PSKQGTAPSRTFGRSSQG. Positions 236-288 constitute a CpcD-like domain; that stretch reads PRLYRIEVTGISLPRYPKVRRSNKEFIVPYEQLSSTLQQINKLGGKVASITFA.

The protein belongs to the phycobilisome linker protein family.

It localises to the cellular thylakoid membrane. Rod linker protein, associated with phycocyanin. Linker polypeptides determine the state of aggregation and the location of the disk-shaped phycobiliprotein units within the phycobilisome and modulate their spectroscopic properties in order to mediate a directed and optimal energy transfer. The chain is Phycobilisome 39 kDa linker polypeptide, phycocyanin-associated, rod (cpcI2) from Microchaete diplosiphon (Fremyella diplosiphon).